The chain runs to 215 residues: Peroxiredoxin (215 aa).

A Thioredoxin domain is found at 6 to 161 (PLIGEEFPRL…ILRAVRALQT (156 aa)). Cys-48 (cysteine sulfenic acid (-SOH) intermediate) is an active-site residue. Arg-124 contacts substrate. Residues Cys-205 and Cys-211 are joined by a disulfide bond.

This sequence belongs to the peroxiredoxin family. Prx6 subfamily. Homodecamer. Pentamer of dimers that assemble into a ring structure.

The protein localises to the cytoplasm. The enzyme catalyses a hydroperoxide + [thioredoxin]-dithiol = an alcohol + [thioredoxin]-disulfide + H2O. Its function is as follows. Thiol-specific peroxidase that catalyzes the reduction of hydrogen peroxide and organic hydroperoxides to water and alcohols, respectively. Plays a role in cell protection against oxidative stress by detoxifying peroxides. The protein is Peroxiredoxin of Thermotoga petrophila (strain ATCC BAA-488 / DSM 13995 / JCM 10881 / RKU-1).